The chain runs to 91 residues: Sec-independent protein translocase protein TatA (91 aa).

Residues 1 to 21 traverse the membrane as a helical segment; it reads MGIFDWKHWIVILIVVVLVFG. Residues 42–91 are disordered; that stretch reads AMHDDDKPAEQPAPQPQQAQPAPQGSPLNQPHTIDAQAHKVDEPIRKDQV. Residues 51 to 64 show a composition bias toward low complexity; that stretch reads EQPAPQPQQAQPAP. A compositionally biased stretch (basic and acidic residues) spans 78–91; sequence QAHKVDEPIRKDQV.

This sequence belongs to the TatA/E family. As to quaternary structure, the Tat system comprises two distinct complexes: a TatABC complex, containing multiple copies of TatA, TatB and TatC subunits, and a separate TatA complex, containing only TatA subunits. Substrates initially bind to the TatABC complex, which probably triggers association of the separate TatA complex to form the active translocon.

The protein resides in the cell inner membrane. Its function is as follows. Part of the twin-arginine translocation (Tat) system that transports large folded proteins containing a characteristic twin-arginine motif in their signal peptide across membranes. TatA could form the protein-conducting channel of the Tat system. This Pseudomonas syringae pv. tomato (strain ATCC BAA-871 / DC3000) protein is Sec-independent protein translocase protein TatA.